A 443-amino-acid polypeptide reads, in one-letter code: Probable D-serine dehydratase (443 aa).

Residue K118 is modified to N6-(pyridoxal phosphate)lysine.

The protein belongs to the serine/threonine dehydratase family. DsdA subfamily. Requires pyridoxal 5'-phosphate as cofactor.

The enzyme catalyses D-serine = pyruvate + NH4(+). The chain is Probable D-serine dehydratase from Colwellia psychrerythraea (strain 34H / ATCC BAA-681) (Vibrio psychroerythus).